A 224-amino-acid chain; its full sequence is Small ribosomal subunit protein uS5 (224 aa).

A disordered region spans residues 1–38 (MAEQSAGGQGAPEGRDSRDSREGRGRRDGGRGGRDSDK). Residues 13–38 (EGRDSRDSREGRGRRDGGRGGRDSDK) are compositionally biased toward basic and acidic residues. The S5 DRBM domain occupies 41–104 (YLERVVAINR…EEARKGFFRV (64 aa)).

This sequence belongs to the universal ribosomal protein uS5 family. Part of the 30S ribosomal subunit. Contacts proteins S4 and S8.

Functionally, with S4 and S12 plays an important role in translational accuracy. Its function is as follows. Located at the back of the 30S subunit body where it stabilizes the conformation of the head with respect to the body. This is Small ribosomal subunit protein uS5 from Mycobacterium ulcerans (strain Agy99).